The chain runs to 492 residues: Trypanothione reductase (492 aa).

FAD is bound at residue 35-52 (DVQTHHGPPHYAALGGTC). The cysteines at positions 52 and 57 are disulfide-linked. The Proton acceptor role is filled by His-461.

The protein belongs to the class-I pyridine nucleotide-disulfide oxidoreductase family. As to quaternary structure, homodimer. It depends on FAD as a cofactor.

Its subcellular location is the cytoplasm. It catalyses the reaction trypanothione + NADP(+) = trypanothione disulfide + NADPH + H(+). Trypanothione is the parasite analog of glutathione; this enzyme is the equivalent of glutathione reductase. The sequence is that of Trypanothione reductase (TPR) from Trypanosoma brucei brucei.